We begin with the raw amino-acid sequence, 325 residues long: Pectinesterase A (325 aa).

The signal sequence occupies residues 1-18 (MRVQSYLSLFSLVGAALC). Asparagine 126 carries an N-linked (GlcNAc...) asparagine glycan. Residue glutamine 143 participates in substrate binding. Aspartate 166 serves as the catalytic Proton donor. The active-site Nucleophile is the aspartate 187. 2 residues coordinate substrate: arginine 247 and tryptophan 249.

The protein belongs to the pectinesterase family.

The protein localises to the secreted. The enzyme catalyses [(1-&gt;4)-alpha-D-galacturonosyl methyl ester](n) + n H2O = [(1-&gt;4)-alpha-D-galacturonosyl](n) + n methanol + n H(+). The protein operates within glycan metabolism; pectin degradation; 2-dehydro-3-deoxy-D-gluconate from pectin: step 1/5. Involved in maceration and soft-rotting of plant tissue. Active against citrus pectin. The protein is Pectinesterase A (pmeA) of Emericella nidulans (strain FGSC A4 / ATCC 38163 / CBS 112.46 / NRRL 194 / M139) (Aspergillus nidulans).